The sequence spans 882 residues: Alanine--tRNA ligase (882 aa).

Histidine 570, histidine 574, cysteine 672, and histidine 676 together coordinate Zn(2+).

This sequence belongs to the class-II aminoacyl-tRNA synthetase family. Requires Zn(2+) as cofactor.

Its subcellular location is the cytoplasm. The catalysed reaction is tRNA(Ala) + L-alanine + ATP = L-alanyl-tRNA(Ala) + AMP + diphosphate. Catalyzes the attachment of alanine to tRNA(Ala) in a two-step reaction: alanine is first activated by ATP to form Ala-AMP and then transferred to the acceptor end of tRNA(Ala). Also edits incorrectly charged Ser-tRNA(Ala) and Gly-tRNA(Ala) via its editing domain. In Xanthomonas campestris pv. campestris (strain ATCC 33913 / DSM 3586 / NCPPB 528 / LMG 568 / P 25), this protein is Alanine--tRNA ligase.